Consider the following 1013-residue polypeptide: Zinc finger and BTB domain-containing protein 4 (1013 aa).

Positions 30–152 (CDVTLIAGDT…IYSARLALPG (123 aa)) constitute a BTB domain. Lys-40 is covalently cross-linked (Glycyl lysine isopeptide (Lys-Gly) (interchain with G-Cter in SUMO2)). Positions 67–110 (LPPATGGAAPNPATTTAASSSSSSSSSSSSSSSSASSSSSSSSS) are enriched in low complexity. Disordered stretches follow at residues 67–124 (LPPA…SPPR) and 183–221 (DAWV…AEAQ). The span at 111–121 (SPPPASPPASS) shows a compositional bias: pro residues. Positions 186–348 (VPPTPAPMAT…CRYCEKVFAL (163 aa)) are interaction with CBFA2T3. The C2H2-type 1; atypical zinc finger occupies 234–256 (LPCPQCGKSFIHPKRLQTHEAQC). Positions 257 to 281 (RRGASTRGSTGLGAGGAGPGGPAGV) are disordered. The span at 266 to 279 (TGLGAGGAGPGGPA) shows a compositional bias: gly residues. 3 C2H2-type zinc fingers span residues 309–331 (YVCA…SNVH), 337–359 (YPCR…EVWH), and 365–388 (YQCI…RAFH). Ser-391 bears the Phosphoserine mark. Disordered stretches follow at residues 428-765 (KTYS…STRF), 783-852 (HGQR…DPII), 883-904 (GREP…AGEG), and 972-1013 (VNPQ…GDVG). Residues 453–470 (ASPPPGPPPAPEPGPPPS) show a composition bias toward pro residues. Low complexity-rich tracts occupy residues 496–506 (TASTGGSQAAS) and 531–554 (ATPT…ATTT). Lys-573 participates in a covalent cross-link: Glycyl lysine isopeptide (Lys-Gly) (interchain with G-Cter in SUMO2). Positions 576–590 (GGIGGGGGPPTGAGR) are enriched in gly residues. Positions 608–625 (IGEEAIVKRRISETDLRP) are enriched in basic and acidic residues. Residue Lys-615 forms a Glycyl lysine isopeptide (Lys-Gly) (interchain with G-Cter in SUMO2) linkage. The stretch at 627-663 (ELSGEEMEESEEDEEEEDEEEEEEDEEESKAGGEDQL) forms a coiled coil. The segment covering 629 to 654 (SGEEMEESEEDEEEEDEEEEEEDEEE) has biased composition (acidic residues). Gly residues predominate over residues 678–689 (AAGGASVGGSGL). C2H2-type zinc fingers lie at residues 726–748 (HRCG…QEAH) and 765–787 (FTCP…GQRH). Phosphothreonine; by HIPK2 is present on residues Thr-795 and Thr-797. The segment covering 836-846 (TAAEEASETAS) has biased composition (low complexity). Residues 883–902 (GREPGGGRGKSGSEGPVGAG) are compositionally biased toward gly residues. Residues 976–995 (AAPPAPPTPPPPTLPPPIPP) show a composition bias toward pro residues. Thr-983 bears the Phosphothreonine; by HIPK2 mark. Residues 997-1013 (GEGERAGVERTQKGDVG) are compositionally biased toward basic and acidic residues.

In terms of assembly, interacts with HIPK2. Interacts with CBFA2T3. Interacts with ZBTB38. Post-translationally, phosphorylated by HIPK2. This phosphorylation reduces stability and triggers ZBTB4 protein degradation in response to DNA damage.

The protein localises to the nucleus. It is found in the chromosome. Functionally, transcriptional repressor with bimodal DNA-binding specificity. Represses transcription in a methyl-CpG-dependent manner. Binds with a higher affinity to methylated CpG dinucleotides in the consensus sequence 5'-CGCG-3' but can also bind to the non-methylated consensus sequence 5'-CTGCNA-3' also known as the consensus kaiso binding site (KBS). Can also bind specifically to a single methyl-CpG pair and can bind hemimethylated DNA but with a lower affinity compared to methylated DNA. Plays a role in postnatal myogenesis, may be involved in the regulation of satellite cells self-renewal. In Homo sapiens (Human), this protein is Zinc finger and BTB domain-containing protein 4 (ZBTB4).